A 447-amino-acid polypeptide reads, in one-letter code: MTTILKHLPVGQRIGIAFSGGLDTSAALLWMRQKGAVPYAYTANLGQPDEEDYDAIPRRAMEYGAENARLIDCRKQLVAEGIAAIQCGAFHNTTGGLTYFNTTPLGRAVTGTMLVAAMKEDGVNIWGDGSTYKGNDIERFYRYGLLTNAELQIYKPWLDTDFIDELGGRHEMSEFMIACGFDYKMSVEKAYSTDSNMLGATHEAKDLEYLNSSVKIVNPIMGVKFWDESVKIPAEEVTVRFEQGHPVALNGKTFSDDVEMMLEANRIGGRHGLGMSDQIENRIIEAKSRGIYEAPGMALLHIAYERLLTGIHNEDTIEQYHAHGRQLGRLLYQGRWFDSQALMLRDSLQRWVASQITGEVTLELRRGNDYSILNTVSENLTYKPERLTMEKGDSVFSPDDRIGQLTMRNLDITDTREKLFGYAKTGLLSSSATSGVPQVENMENKGQ.

ATP is bound by residues 17–25 and Ala-43; that span reads AFSGGLDTS. Tyr-99 contributes to the L-citrulline binding site. The ATP site is built by Gly-129 and Thr-131. Positions 131, 135, and 136 each coordinate L-aspartate. Asn-135 lines the L-citrulline pocket. Asp-136 contacts ATP. L-citrulline is bound by residues Arg-139 and Ser-192. Asp-194 serves as a coordination point for ATP. Thr-201, Glu-203, and Glu-280 together coordinate L-citrulline.

The protein belongs to the argininosuccinate synthase family. Type 2 subfamily. As to quaternary structure, homotetramer.

It is found in the cytoplasm. It carries out the reaction L-citrulline + L-aspartate + ATP = 2-(N(omega)-L-arginino)succinate + AMP + diphosphate + H(+). It participates in amino-acid biosynthesis; L-arginine biosynthesis; L-arginine from L-ornithine and carbamoyl phosphate: step 2/3. This chain is Argininosuccinate synthase, found in Escherichia coli O139:H28 (strain E24377A / ETEC).